The primary structure comprises 478 residues: ATP synthase subunit beta (478 aa).

152–159 (GGAGVGKT) is a binding site for ATP.

This sequence belongs to the ATPase alpha/beta chains family. As to quaternary structure, F-type ATPases have 2 components, CF(1) - the catalytic core - and CF(0) - the membrane proton channel. CF(1) has five subunits: alpha(3), beta(3), gamma(1), delta(1), epsilon(1). CF(0) has three main subunits: a(1), b(2) and c(9-12). The alpha and beta chains form an alternating ring which encloses part of the gamma chain. CF(1) is attached to CF(0) by a central stalk formed by the gamma and epsilon chains, while a peripheral stalk is formed by the delta and b chains.

The protein localises to the cell membrane. It carries out the reaction ATP + H2O + 4 H(+)(in) = ADP + phosphate + 5 H(+)(out). Functionally, produces ATP from ADP in the presence of a proton gradient across the membrane. The catalytic sites are hosted primarily by the beta subunits. The protein is ATP synthase subunit beta of Wolbachia pipientis subsp. Culex pipiens (strain wPip).